A 464-amino-acid polypeptide reads, in one-letter code: RYamide receptor (464 aa).

Topologically, residues Met1–Lys105 are extracellular. N-linked (GlcNAc...) asparagine glycosylation is found at Asn49, Asn79, and Asn85. The helical transmembrane segment at Ile106 to Val126 threads the bilayer. Residues Cys127 to Ala148 are Cytoplasmic-facing. The chain crosses the membrane as a helical span at residues Ile149 to Leu169. The Extracellular segment spans residues Asn170–Ser189. N-linked (GlcNAc...) asparagine glycosylation is present at Asn183. A helical membrane pass occupies residues Val190–Trp210. The Cytoplasmic segment spans residues Pro211 to Ala221. A helical membrane pass occupies residues Thr222 to Val242. At Ser243–Tyr274 the chain is on the extracellular side. A helical transmembrane segment spans residues Thr275–Ala295. Residues Arg296 to Met329 lie on the Cytoplasmic side of the membrane. The helical transmembrane segment at Leu330 to Leu350 threads the bilayer. Residues Asn351–Tyr363 are Extracellular-facing. A helical membrane pass occupies residues Val364–Cys384. At Tyr385–Arg464 the chain is on the cytoplasmic side.

The protein belongs to the G-protein coupled receptor 1 family.

It is found in the cell membrane. Functionally, receptor for the neuropeptides RYamide-1 and RYamide-2. The activity of this receptor is mediated by G proteins which activate a phosphatidyl-inositol-calcium second messenger system. RYamide signaling may suppress feeding behavior. The chain is RYamide receptor from Drosophila melanogaster (Fruit fly).